Here is a 265-residue protein sequence, read N- to C-terminus: ATP synthase subunit a (265 aa).

Transmembrane regions (helical) follow at residues Phe-25–Trp-45, Ile-88–Ile-108, Asp-142–Ile-162, Leu-207–Trp-227, and Phe-233–Leu-253.

Belongs to the ATPase A chain family. F-type ATPases have 2 components, CF(1) - the catalytic core - and CF(0) - the membrane proton channel. CF(1) has five subunits: alpha(3), beta(3), gamma(1), delta(1), epsilon(1). CF(0) has three main subunits: a(1), b(2) and c(9-12). The alpha and beta chains form an alternating ring which encloses part of the gamma chain. CF(1) is attached to CF(0) by a central stalk formed by the gamma and epsilon chains, while a peripheral stalk is formed by the delta and b chains.

Its subcellular location is the cell inner membrane. Key component of the proton channel; it plays a direct role in the translocation of protons across the membrane. This chain is ATP synthase subunit a, found in Idiomarina loihiensis (strain ATCC BAA-735 / DSM 15497 / L2-TR).